The following is a 239-amino-acid chain: Serine protease SplF (239 aa).

The N-terminal stretch at 1-36 is a signal peptide; the sequence is MNKNIIIKSIAALTILTSITGVGTTVVDGIQQTAKA. Active-site charge relay system residues include His75, Asp114, and Ser192.

This sequence belongs to the peptidase S1B family.

It is found in the secreted. The polypeptide is Serine protease SplF (splF) (Staphylococcus aureus (strain MSSA476)).